Reading from the N-terminus, the 680-residue chain is DNA ligase (680 aa).

NAD(+)-binding positions include D44–D48, S93–M94, and E125. The active-site N6-AMP-lysine intermediate is K127. NAD(+) contacts are provided by R148, E182, K298, and K322. Residues C416, C419, C434, and C439 each coordinate Zn(2+). In terms of domain architecture, BRCT spans N600–Q680.

It belongs to the NAD-dependent DNA ligase family. LigA subfamily. It depends on Mg(2+) as a cofactor. Mn(2+) serves as cofactor.

The catalysed reaction is NAD(+) + (deoxyribonucleotide)n-3'-hydroxyl + 5'-phospho-(deoxyribonucleotide)m = (deoxyribonucleotide)n+m + AMP + beta-nicotinamide D-nucleotide.. Its function is as follows. DNA ligase that catalyzes the formation of phosphodiester linkages between 5'-phosphoryl and 3'-hydroxyl groups in double-stranded DNA using NAD as a coenzyme and as the energy source for the reaction. It is essential for DNA replication and repair of damaged DNA. This is DNA ligase from Limosilactobacillus reuteri (strain DSM 20016) (Lactobacillus reuteri).